The primary structure comprises 342 residues: Methionine import ATP-binding protein MetN (342 aa).

Residues 2 to 241 (ITLEQVTKIY…PQQPITKRFV (240 aa)) enclose the ABC transporter domain. 38–45 (GYSGAGKS) is a binding site for ATP.

It belongs to the ABC transporter superfamily. Methionine importer (TC 3.A.1.24) family. In terms of assembly, the complex is composed of two ATP-binding proteins (MetN), two transmembrane proteins (MetI) and a solute-binding protein (MetQ).

The protein localises to the cell membrane. The catalysed reaction is L-methionine(out) + ATP + H2O = L-methionine(in) + ADP + phosphate + H(+). The enzyme catalyses D-methionine(out) + ATP + H2O = D-methionine(in) + ADP + phosphate + H(+). Functionally, part of the ABC transporter complex MetNIQ involved in methionine import. Responsible for energy coupling to the transport system. This Geobacillus kaustophilus (strain HTA426) protein is Methionine import ATP-binding protein MetN.